The sequence spans 396 residues: B2 bradykinin receptor (396 aa).

The Extracellular segment spans residues 1-65 (MDTRSSLCPK…EWWSWLNAIQ (65 aa)). N33 and N44 each carry an N-linked (GlcNAc...) asparagine glycan. The helical transmembrane segment at 66–89 (APFLWVLFLLAALENIFVLSVFCL) threads the bilayer. Topologically, residues 90–98 (HKTNCTVAE) are cytoplasmic. The helical transmembrane segment at 99–123 (IYLGNLAAADLILACGLPFWAITIA) threads the bilayer. At 124 to 136 (NNFDWLFGEVLCR) the chain is on the extracellular side. A disulfide bridge connects residues C135 and C216. Residues 137-158 (VVNTMIYMNLYSSICFLMLVSI) traverse the membrane as a helical segment. Topologically, residues 159-180 (DRYLALVKTMSMGRMRGVRWAK) are cytoplasmic. At Y161 the chain carries Phosphotyrosine. The helical transmembrane segment at 181–203 (LYSLVIWSCTLLLSSPMLVFRTM) threads the bilayer. The Extracellular segment spans residues 204–226 (KDYREEGHNVTACVIVYPSRSWE). N-linked (GlcNAc...) asparagine glycosylation is present at N212. The helical transmembrane segment at 227–253 (VFTNMLLNLVGFLLPLSIITFCTVRIM) threads the bilayer. Residues 254–272 (QVLRNNEMKKFKEVQTEKK) lie on the Cytoplasmic side of the membrane. A helical transmembrane segment spans residues 273–297 (ATVLVLAVLGLFVLCWFPFQISTFL). At 298 to 316 (DTLLRLGVLSGCWNERAVD) the chain is on the extracellular side. Residues 317–340 (IVTQISSYVAYSNSCLNPLVYVIV) form a helical membrane-spanning segment. Residues 341–396 (GKRFRKKSREVYQAICRKGGCMGESVQMENSMGTLRTSISVDRQIHKLQDWAGNKQ) are Cytoplasmic-facing. Phosphotyrosine is present on Y352. A lipid anchor (S-palmitoyl cysteine) is attached at C356. Phosphoserine is present on residues S365 and S371. T374 carries the post-translational modification Phosphothreonine. Residues S378 and S380 each carry the phosphoserine; by GRK6 modification.

Belongs to the G-protein coupled receptor 1 family. Bradykinin receptor subfamily. BDKRB2 sub-subfamily. In terms of assembly, forms a complex with PECAM1 and GNAQ. Interacts with PECAM1. Diphosphorylation at Ser-365 and Ser-371, at Ser-378 and Ser-380, and at Thr-374 and Ser-380 seem to be correlated pairwise. Post-translationally, palmitoylation at Cys-356 and phosphorylation at Tyr-352 seem to be mutually exclusive. In terms of tissue distribution, uterus, vas deferens, kidney, ileum, heart, testis, lung and brain.

It is found in the cell membrane. Functionally, receptor for bradykinin. It is associated with G proteins that activate a phosphatidylinositol-calcium second messenger system. This chain is B2 bradykinin receptor (Bdkrb2), found in Rattus norvegicus (Rat).